The primary structure comprises 328 residues: Urokinase plasminogen activator surface receptor (328 aa).

Positions 1-24 (MGLLRRRLLLLVVVVTTCVPASQG) are cleaved as a signal peptide. 3 consecutive UPAR/Ly6 domains span residues 25–118 (LRCI…GRYL), 118–213 (LECA…PPNG), and 214–299 (FQCY…RPTG). Disulfide bonds link C27-C48, C30-C36, and C41-C69. N76 carries an N-linked (GlcNAc...) asparagine glycan. Cystine bridges form between C95–C100, C120–C147, C123–C130, C140–C169, C175–C192, C193–C198, C216–C244, C219–C227, C237–C263, C269–C288, and C289–C294. N-linked (GlcNAc...) asparagine glycosylation is found at N184, N194, N222, N255, N283, and N290. G299 carries the GPI-anchor amidated glycine lipid modification. Residues 300 to 328 (GAPGPGPAHLILIASLLLTLRLWGIPLWT) constitute a propeptide, removed in mature form.

In terms of assembly, monomer. Interacts (via the UPAR/Ly6 domains) with SRPX2. Interacts with MRC2. Interacts with SORL1 (via N-terminal ectodomain); this interaction decreases PLAUR internalization. The ternary complex composed of PLAUR-PLAU-SERPINE1 also interacts with SORL1. Interacts with CD82; this interaction prevents PLAUR from binding to its high affinity ligand PLAU.

It is found in the cell membrane. It localises to the secreted. Its function is as follows. Acts as a receptor for urokinase plasminogen activator. Plays a role in localizing and promoting plasmin formation. Mediates the proteolysis-independent signal transduction activation effects of U-PA. This is Urokinase plasminogen activator surface receptor (Plaur) from Rattus norvegicus (Rat).